The chain runs to 345 residues: DNA-directed RNA polymerase subunit alpha (345 aa).

The segment at 1–233 (MVRNWCSLIR…KQLQVFVGLH (233 aa)) is alpha N-terminal domain (alpha-NTD). An alpha C-terminal domain (alpha-CTD) region spans residues 256-345 (LNDILLRHVE…EEMGEIQEEG (90 aa)).

The protein belongs to the RNA polymerase alpha chain family. Homodimer. The RNAP catalytic core consists of 2 alpha, 1 beta, 1 beta' and 1 omega subunit. When a sigma factor is associated with the core the holoenzyme is formed, which can initiate transcription.

It catalyses the reaction RNA(n) + a ribonucleoside 5'-triphosphate = RNA(n+1) + diphosphate. DNA-dependent RNA polymerase catalyzes the transcription of DNA into RNA using the four ribonucleoside triphosphates as substrates. The chain is DNA-directed RNA polymerase subunit alpha from Syntrophus aciditrophicus (strain SB).